We begin with the raw amino-acid sequence, 637 residues long: Chaperone protein DnaK (637 aa).

A Phosphothreonine; by autocatalysis modification is found at Thr198. The disordered stretch occupies residues 597-637 (MYQQAAQESGQTEGAAQDPKGAAQDDDVVDADFEEVKDHKK). Residues 600–610 (QAAQESGQTEG) are compositionally biased toward polar residues. Residues 620-629 (QDDDVVDADF) are compositionally biased toward acidic residues.

Belongs to the heat shock protein 70 family.

Functionally, acts as a chaperone. The chain is Chaperone protein DnaK from Desulforapulum autotrophicum (strain ATCC 43914 / DSM 3382 / VKM B-1955 / HRM2) (Desulfobacterium autotrophicum).